A 250-amino-acid chain; its full sequence is MQISSRSGFGYFSYGIRLALTPGIRRFVVLPLLANIILVGGAMYYLFSHLDTWISEWIGQLPSFLSWLSYVLWPLLALTILATFSYFFSTLANFIASPFNGLLAEKVEQHLSGERIGEEGVWALVKDVPRILSREWRKLLYVLPKALGLFLLLLIPALGQTLGPIAWFLFTAWMLAIQYCDYPFDNHKISFHDMRNTLKQNQSKAYGFGMLVAFFTSIPIVNLFIVPVAVCGATAMWVMEFKIQHSPLRQ.

The next 4 helical transmembrane spans lie at Phe27–Phe47, Phe64–Phe84, Phe150–Phe170, and Met210–Val230.

Belongs to the CysZ family.

Its subcellular location is the cell inner membrane. Functionally, high affinity, high specificity proton-dependent sulfate transporter, which mediates sulfate uptake. Provides the sulfur source for the cysteine synthesis pathway. The chain is Sulfate transporter CysZ from Vibrio cholerae serotype O1 (strain ATCC 39315 / El Tor Inaba N16961).